The sequence spans 259 residues: Short chain dehydrogenase ausX (259 aa).

Ile13, Asp59, Arg121, Tyr153, Lys157, and Val186 together coordinate NADP(+). The active-site Proton acceptor is the Tyr153. Residue Tyr153 is the Proton donor of the active site. Lys157 acts as the Lowers pKa of active site Tyr in catalysis.

This sequence belongs to the short-chain dehydrogenases/reductases (SDR) family.

It functions in the pathway secondary metabolite biosynthesis; terpenoid biosynthesis. Functionally, short chain dehydrogenase; part of the gene cluster A that mediates the biosynthesis of the fungal meroterpenoid acetoxydehydroaustin. The first step of the pathway is the synthesis of 3,5-dimethylorsellinic acid by the polyketide synthase ausA. 3,5-dimethylorsellinic acid is then prenylated by the polyprenyl transferase ausN. Further epoxidation by the FAD-dependent monooxygenase ausM and cyclization by the probable terpene cyclase ausL lead to the formation of protoaustinoid A. Protoaustinoid A is then oxidized to spiro-lactone preaustinoid A3 by the combined action of the FAD-binding monooxygenases ausB and ausC, and the dioxygenase ausE. Acid-catalyzed keto-rearrangement and ring contraction of the tetraketide portion of preaustinoid A3 by ausJ lead to the formation of preaustinoid A4. The aldo-keto reductase ausK, with the help of ausH, is involved in the next step by transforming preaustinoid A4 into isoaustinone which is in turn hydroxylated by the P450 monooxygenase ausI to form austinolide. The cytochrome P450 monooxygenase ausG then modifies austinolide to austinol. Austinol is further acetylated to austin by the O-acetyltransferase ausP, which spontaneously changes to dehydroaustin. The cytochrome P450 monooxygenase then converts dehydroaustin is into 7-dehydrodehydroaustin. The hydroxylation catalyzed by ausR permits the second O-acetyltransferase ausQ to add an additional acetyl group to the molecule, leading to the formation of acetoxydehydroaustin. Due to genetic rearrangements of the clusters and the subsequent loss of some enzymes, the end product of the Penicillium brasilianum austinoid biosynthesis clusters is acetoxydehydroaustin. The chain is Short chain dehydrogenase ausX from Penicillium brasilianum.